Here is a 95-residue protein sequence, read N- to C-terminus: Aspartyl/glutamyl-tRNA(Asn/Gln) amidotransferase subunit C (95 aa).

This sequence belongs to the GatC family. Heterotrimer of A, B and C subunits.

The catalysed reaction is L-glutamyl-tRNA(Gln) + L-glutamine + ATP + H2O = L-glutaminyl-tRNA(Gln) + L-glutamate + ADP + phosphate + H(+). It carries out the reaction L-aspartyl-tRNA(Asn) + L-glutamine + ATP + H2O = L-asparaginyl-tRNA(Asn) + L-glutamate + ADP + phosphate + 2 H(+). Functionally, allows the formation of correctly charged Asn-tRNA(Asn) or Gln-tRNA(Gln) through the transamidation of misacylated Asp-tRNA(Asn) or Glu-tRNA(Gln) in organisms which lack either or both of asparaginyl-tRNA or glutaminyl-tRNA synthetases. The reaction takes place in the presence of glutamine and ATP through an activated phospho-Asp-tRNA(Asn) or phospho-Glu-tRNA(Gln). In Sinorhizobium fredii (strain NBRC 101917 / NGR234), this protein is Aspartyl/glutamyl-tRNA(Asn/Gln) amidotransferase subunit C.